The following is a 1171-amino-acid chain: DExH-box ATP-dependent RNA helicase DExH15 chloroplastic (1171 aa).

Residues 1 to 58 (MNTLPVVSLTASSSFKFFHFPSLHRSLSHSPNFSFTKSLILNPNHLSFKSTLNSLSPS) constitute a chloroplast transit peptide. Residues 53–62 (NSLSPSQSQL) are compositionally biased toward polar residues. Positions 53–111 (NSLSPSQSQLYEEEDDEEEEEEDEDDDDEAADEYDNISDEIRNSDDDDDDEETEFSVDL) are disordered. 2 stretches are compositionally biased toward acidic residues: residues 63 to 90 (YEEE…DNIS) and 97 to 107 (DDDDDDEETEF). The region spanning 163–327 (IEAFLRGSSV…WIGEIHGKTE (165 aa)) is the Helicase ATP-binding domain. 176 to 183 (APTSSGKT) contacts ATP. The DEVH box signature appears at 275–278 (DEVH). Positions 424 to 620 (QISDTLWHLQ…ASYGMVLNLV (197 aa)) constitute a Helicase C-terminal domain.

This sequence belongs to the DExH box helicase family.

Its subcellular location is the plastid. The protein localises to the chloroplast. The protein resides in the cytoplasmic granule. The catalysed reaction is ATP + H2O = ADP + phosphate + H(+). In terms of biological role, RNA helicase involved in group II intron splicing. Essential protein required during embryogenesis. Involved in post-transcriptional gene silencing. Modulates the determination of cell fate. Necessary for normal plasmodesmata (PD) development and aperture regulation. This is DExH-box ATP-dependent RNA helicase DExH15 chloroplastic (ISE2) from Arabidopsis thaliana (Mouse-ear cress).